A 549-amino-acid polypeptide reads, in one-letter code: Chaperonin GroEL (549 aa).

Residues 29-32, K50, 86-90, G414, 477-479, and D493 each bind ATP; these read TLGP, DGTTT, and NAA.

This sequence belongs to the chaperonin (HSP60) family. As to quaternary structure, forms a cylinder of 14 subunits composed of two heptameric rings stacked back-to-back. Interacts with the co-chaperonin GroES.

It localises to the cytoplasm. The catalysed reaction is ATP + H2O + a folded polypeptide = ADP + phosphate + an unfolded polypeptide.. Functionally, together with its co-chaperonin GroES, plays an essential role in assisting protein folding. The GroEL-GroES system forms a nano-cage that allows encapsulation of the non-native substrate proteins and provides a physical environment optimized to promote and accelerate protein folding. The polypeptide is Chaperonin GroEL (Geotalea uraniireducens (strain Rf4) (Geobacter uraniireducens)).